The chain runs to 415 residues: Zona pellucida-like domain-containing protein 1 (415 aa).

A signal peptide spans 1–19 (MERVWLLFLLAIRVSPGSA). Topologically, residues 20–373 (QFNSYNCDAN…PFQLNAVTSS (354 aa)) are extracellular. The ZP domain occupies 43 to 320 (YCGVQAITMK…PICGNRKRRD (278 aa)). Cystine bridges form between cysteine 44-cysteine 155 and cysteine 79-cysteine 104. N-linked (GlcNAc...) asparagine glycosylation occurs at asparagine 164. 2 disulfides stabilise this stretch: cysteine 235–cysteine 296 and cysteine 255–cysteine 313. A helical membrane pass occupies residues 374-394 (LISGMVILGVLCFSLLLCSLA). At 395–415 (LLHRKGSTSLVLNGVRNPVFE) the chain is on the cytoplasmic side.

Proteolytically cleaved before the transmembrane segment to yield the secreted form found in the extracellular matrix of the cupula.

The protein localises to the cytoplasmic vesicle membrane. Its subcellular location is the secreted. It localises to the extracellular space. The protein resides in the extracellular matrix. In terms of biological role, glycoprotein which is a component of the gelatinous extracellular matrix in the cupulae of the vestibular organ. The chain is Zona pellucida-like domain-containing protein 1 (Zpld1) from Mus musculus (Mouse).